We begin with the raw amino-acid sequence, 145 residues long: Large ribosomal subunit protein mL43 (145 aa).

This sequence belongs to the mitochondrion-specific ribosomal protein mL43 family. Component of the mitochondrial large ribosomal subunit (mt-LSU). Mature yeast 74S mitochondrial ribosomes consist of a small (37S) and a large (54S) subunit. The 37S small subunit contains a 15S ribosomal RNA (15S mt-rRNA) and at least 32 different proteins. The 54S large subunit contains a 21S rRNA (21S mt-rRNA) and at least 45 different proteins.

The protein resides in the mitochondrion. Component of the mitochondrial ribosome (mitoribosome), a dedicated translation machinery responsible for the synthesis of mitochondrial genome-encoded proteins, including at least some of the essential transmembrane subunits of the mitochondrial respiratory chain. The mitoribosomes are attached to the mitochondrial inner membrane and translation products are cotranslationally integrated into the membrane. Also has an extraribosomal function, being essential for mitochondrial genome integrity. May interact with MHR1 to take part in the mtDNA repair mechanism. This is Large ribosomal subunit protein mL43 (mrpl51) from Schizosaccharomyces pombe (strain 972 / ATCC 24843) (Fission yeast).